The primary structure comprises 198 residues: Adenine phosphoribosyltransferase (198 aa).

Belongs to the purine/pyrimidine phosphoribosyltransferase family. Homodimer.

Its subcellular location is the cytoplasm. It catalyses the reaction AMP + diphosphate = 5-phospho-alpha-D-ribose 1-diphosphate + adenine. The protein operates within purine metabolism; AMP biosynthesis via salvage pathway; AMP from adenine: step 1/1. In terms of biological role, catalyzes a salvage reaction resulting in the formation of AMP, that is energically less costly than de novo synthesis. This chain is Adenine phosphoribosyltransferase, found in Serratia proteamaculans (strain 568).